Reading from the N-terminus, the 319-residue chain is Mitochondrial fission regulator 1-like-A (319 aa).

A disordered region spans residues 1-37 (MASLGAAAEPERNLFGKDEAEAYESPEGRRSGRKKRT). Basic and acidic residues predominate over residues 9–30 (EPERNLFGKDEAEAYESPEGRR).

This sequence belongs to the MTFR1 family.

The protein localises to the mitochondrion outer membrane. Functionally, mitochondrial protein required for adaptation of miochondrial dynamics to metabolic changes. Regulates mitochondrial morphology at steady state and mediates AMPK-dependent stress-induced mitochondrial fragmentation via the control of OPA1 levels. The sequence is that of Mitochondrial fission regulator 1-like-A (mtfr1l-a) from Xenopus laevis (African clawed frog).